Here is a 354-residue protein sequence, read N- to C-terminus: MSGNTLGRLFRLTTYGESHGAGLGGVIDGCPAGIALDEAVIQRELDLRRPGGNSASTTRQEPDRVRLLSGVFEGVTTGTPIAFHVENVDQRSRDYGEIARLYRPGHADFTYDAKFGVRDYRGGGRASGRETLSRVAGGAIAQALLARHGIAVRAFTVELGGVPADLVDVAGAQQRPFFSPDPDVVEAWEDMVRTVKGEGDTLGGIVQVEATGVPAGLGEPVFDKLDAVLAYALMSVGAVKGVEVGAGFEAARMHGSDNNDPIVPSGFFTNHAGGILGGISNGETIVLRAAVKPIPSIAQEQITIDRDGKPSALFIAGRHDISAIPRIVPVLKAMTALVLADMLLMQRRMATPQP.

Arg48 contributes to the NADP(+) binding site. Residues 125–127, Gly277, 292–296, and Arg318 each bind FMN; these read RAS and KPIPS.

This sequence belongs to the chorismate synthase family. As to quaternary structure, homotetramer. It depends on FMNH2 as a cofactor.

It carries out the reaction 5-O-(1-carboxyvinyl)-3-phosphoshikimate = chorismate + phosphate. It participates in metabolic intermediate biosynthesis; chorismate biosynthesis; chorismate from D-erythrose 4-phosphate and phosphoenolpyruvate: step 7/7. In terms of biological role, catalyzes the anti-1,4-elimination of the C-3 phosphate and the C-6 proR hydrogen from 5-enolpyruvylshikimate-3-phosphate (EPSP) to yield chorismate, which is the branch point compound that serves as the starting substrate for the three terminal pathways of aromatic amino acid biosynthesis. This reaction introduces a second double bond into the aromatic ring system. This Nitratidesulfovibrio vulgaris (strain ATCC 29579 / DSM 644 / CCUG 34227 / NCIMB 8303 / VKM B-1760 / Hildenborough) (Desulfovibrio vulgaris) protein is Chorismate synthase.